Reading from the N-terminus, the 409-residue chain is Tryptophan synthase beta chain (409 aa).

At lysine 104 the chain carries N6-(pyridoxal phosphate)lysine.

This sequence belongs to the TrpB family. In terms of assembly, tetramer of two alpha and two beta chains. Requires pyridoxal 5'-phosphate as cofactor.

It catalyses the reaction (1S,2R)-1-C-(indol-3-yl)glycerol 3-phosphate + L-serine = D-glyceraldehyde 3-phosphate + L-tryptophan + H2O. It participates in amino-acid biosynthesis; L-tryptophan biosynthesis; L-tryptophan from chorismate: step 5/5. Its function is as follows. The beta subunit is responsible for the synthesis of L-tryptophan from indole and L-serine. In Trichodesmium erythraeum (strain IMS101), this protein is Tryptophan synthase beta chain.